We begin with the raw amino-acid sequence, 388 residues long: Succinate--CoA ligase [ADP-forming] subunit beta (388 aa).

The 236-residue stretch at 9–244 folds into the ATP-grasp domain; the sequence is KQLFARYGLP…QSQEDPREAQ (236 aa). ATP contacts are provided by residues lysine 46, 53–55, glutamate 99, threonine 102, and glutamate 107; that span reads GRG. Mg(2+)-binding residues include asparagine 199 and aspartate 213. Substrate contacts are provided by residues asparagine 264 and 321–323; that span reads GIV.

This sequence belongs to the succinate/malate CoA ligase beta subunit family. In terms of assembly, heterotetramer of two alpha and two beta subunits. Mg(2+) is required as a cofactor.

The enzyme catalyses succinate + ATP + CoA = succinyl-CoA + ADP + phosphate. The catalysed reaction is GTP + succinate + CoA = succinyl-CoA + GDP + phosphate. It functions in the pathway carbohydrate metabolism; tricarboxylic acid cycle; succinate from succinyl-CoA (ligase route): step 1/1. Functionally, succinyl-CoA synthetase functions in the citric acid cycle (TCA), coupling the hydrolysis of succinyl-CoA to the synthesis of either ATP or GTP and thus represents the only step of substrate-level phosphorylation in the TCA. The beta subunit provides nucleotide specificity of the enzyme and binds the substrate succinate, while the binding sites for coenzyme A and phosphate are found in the alpha subunit. This chain is Succinate--CoA ligase [ADP-forming] subunit beta, found in Enterobacter sp. (strain 638).